A 1016-amino-acid polypeptide reads, in one-letter code: MDTSGFLDLDINSGTTTPNIRNSVTTSNDIMSSIFDTIPTKEKKVDAAVESIFGTEAANSPLISSSIPPIPIEASTSTQQQQQQQQQQEEIIPSQPISVTKENTVTTTTTTTATTAVPTTTTTPTSTLINSEPIVVNPLEVNINTKVDDSDSDQDEQIKKENVVHEIFTPIVSIINNNNNNNNNEIDNNNNGNSNENTTTTTTNKDMNNSFSMGVTTASKDEHIISTTTVGTIEQEIHEKQEEPLISPLQSEFNKIFFSTIPLEKKPLEILKMNAFTGALKYSPLRGIAWKLFLGGLDINRVDKWERDITQQRKRYEKLKEEHCFDPRNSNSTYDPLSQNDDSPWNKFFKNLDTQKIIKIDLERTHPDNDFFSNPVIREMMATILFVYSKTNGIISYRQGMHELLAPIIYLYNQEYSSYKKLDENSSSTLVDFIYNIKYLEHDTFAIFERLMKFTSDWYAPAPTQQTNNSNNSNNTNNNNTTTSPSSSSSSSSSSTTTAAATTVSSSTSTSSSSSTITSSSSSTVSPPPPSSSSSPSPPPPPPLGSNSPTVASSSSSSVQDNEEEELSSKCNDVVLKCKYIHSILLKQKDFELYQHLDSLDIEPQIYLLRWIRLLFGREFHFDDVLNIWDALFAYGENLILIDYFCISMLTYIREHLLKSDSIYALKRIYKYPPVEDVYMLIKKALEIKDSNCSIAGMVKTAQPPTTLSSSGSRQIPNNNNNNNNNNNNNNNNNNNNNNSNNNINNNNNNSNNNITTPSTQANTLPFPETSTFESTTSSFQPYSSQLSSANTTPIDPLSNKTTPLISSTSNVSNTPNITSTSTLLSSSSSSSSSTTTPLQSHTPILTHNNNNSHFSPSPSSSSSSLNNSSHVSIPVKSNVKDIFANSKESDLFSLFSTATTPINNNTSSLSISNPTISIGQARTLNKHKSMTLPSSPLISQDSEALKQLKNTQIEFGNQLKEVLPFLEKGKNFLLGNEDELSKSEIDDFIKALEKVKQIQEILSNNNINNNNENKL.

5 disordered regions span residues Met1 to Ser23, Ser60 to Thr109, Asn179 to Asn209, Pro463 to Glu566, and Pro704 to Val872. A compositionally biased stretch (polar residues) spans Asn12 to Ser23. Residues Gln79–Gln88 show a composition bias toward low complexity. A Rab-GAP TBC domain is found at Leu280 to Gly636. The segment covering Thr467–Val525 has biased composition (low complexity). Residues Ser526–Leu544 show a composition bias toward pro residues. The span at Gly545 to Ser558 shows a compositional bias: low complexity. Over residues Pro704 to Pro717 the composition is skewed to polar residues. 2 stretches are compositionally biased toward low complexity: residues Asn718–Ile755 and Pro766–Ser789. A compositionally biased stretch (polar residues) spans Ala790 to Ile806. The segment covering Ser807–Val872 has biased composition (low complexity).

Functionally, may act as a GTPase-activating protein for Rab family protein(s). The sequence is that of TBC1 domain family member 5 homolog B (tbc1d5B) from Dictyostelium discoideum (Social amoeba).